A 174-amino-acid chain; its full sequence is Inner membrane protein p22 (174 aa).

Topologically, residues 1-7 (MLHIKMT) are intravirion. Residues 8–28 (ISTLLIALIVLLIIILVVFLY) traverse the membrane as a helical segment. Topologically, residues 29-174 (HKKQQPPKKV…LYLPRNHKYA (146 aa)) are virion surface.

Belongs to the asfivirus inner membrane protein p22 family.

The protein resides in the virion membrane. The protein localises to the host cell membrane. In African swine fever virus (isolate Pig/Kenya/KEN-50/1950) (ASFV), this protein is Inner membrane protein p22.